Here is a 1976-residue protein sequence, read N- to C-terminus: Protein TIC 214 (1976 aa).

The next 6 helical transmembrane spans lie at 11-31 (LLLLWINIVNSVVMVGLYYGF), 64-84 (FIMGQFIVFISTYYPPLHLAL), 87-107 (PHTLTVLVIPYLLSHFWFFWN), 126-146 (LSIQYVFLNNLIFQLFNHFVL), 173-193 (FFGWLIGHMLLMKCIGLVLSW), and 221-241 (IFSILLFIICICYLGRMPSPI). Residues 619-635 (FEEEEEEEEEDDQEEST) show a composition bias toward acidic residues. Disordered stretches follow at residues 619-642 (FEEEEEEEEEDDQEESTDDHGIRS) and 830-861 (SSYVGEGAKEKEKIEEEHEEEKGEYKRKEDKR). Over residues 836 to 861 (GAKEKEKIEEEHEEEKGEYKRKEDKR) the composition is skewed to basic and acidic residues. 2 consecutive transmembrane segments (helical) span residues 1054–1074 (IIKIVLFIKIKVKEVFFFFVL) and 1202–1222 (IYMSILLCITNIYRIYVQFFL). A compositionally biased stretch (basic and acidic residues) spans 1633–1665 (QKERFHPKPKVESNQKGYLELENRNRDEKERQH). The interval 1633–1669 (QKERFHPKPKVESNQKGYLELENRNRDEKERQHQGNL) is disordered.

The protein belongs to the TIC214 family. In terms of assembly, part of the Tic complex.

It localises to the plastid. It is found in the chloroplast inner membrane. Its function is as follows. Involved in protein precursor import into chloroplasts. May be part of an intermediate translocation complex acting as a protein-conducting channel at the inner envelope. This Nymphaea alba (White water-lily) protein is Protein TIC 214.